Here is a 595-residue protein sequence, read N- to C-terminus: Trafficking protein particle complex subunit 14 (595 aa).

Disordered stretches follow at residues A84–E111 and S494–A513.

As to quaternary structure, component of the multisubunit TRAPP II complex, which includes at least TRAPPC1, TRAPPC2, TRAPPC2L, TRAPPC3, TRAPPC4, TRAPPC5, TRAPPC6A/B, TRAPPC9, TRAPPC10 and TRAPPC14. TRAPPC9, TRAPPC10 and TRAPPC14 are specific subunits of the TRAPP II complex. Interacts with alpha-tubulin during mitosis.

The protein localises to the cytoplasm. Its subcellular location is the cytoskeleton. The protein resides in the spindle. It is found in the vesicle. It localises to the midbody. Its function is as follows. Specific subunit of the TRAPP (transport protein particle) II complex, a highly conserved vesicle tethering complex that functions in late Golgi trafficking as a membrane tether. TRAPP II complex also has GEF activity toward RAB1A. TRAPPC14 is required for ciliogenesis. This Danio rerio (Zebrafish) protein is Trafficking protein particle complex subunit 14 (trappc14).